The primary structure comprises 534 residues: Glucans biosynthesis protein D (534 aa).

Residues Met-1–Ala-26 constitute a signal peptide (tat-type signal).

This sequence belongs to the OpgD/OpgG family. In terms of processing, predicted to be exported by the Tat system. The position of the signal peptide cleavage has not been experimentally proven.

It localises to the periplasm. It functions in the pathway glycan metabolism; osmoregulated periplasmic glucan (OPG) biosynthesis. Its function is as follows. Probably involved in the control of the structural glucose backbone of osmoregulated periplasmic glucans (OPGs). The polypeptide is Glucans biosynthesis protein D (Stenotrophomonas maltophilia (strain K279a)).